Consider the following 433-residue polypeptide: MRALRDPICAIATPLGKGAIGVVRLSGEGALEIAARVWRGKDPRRLKGGRFTLGEVVDPKTGEAIDQALLLVFRAPRSYTGEDLVEFQTHGSLAVLRRVMEVLVAEGARPAGRGEFTFRAYMNGKLDLAQAEAVLALIEAEGELARRQALRALEGALSRRIEALENRLLDLLAHIQALLDYPEEGVEPLEAERTLREVLAEVEALLAQAKASRLAQKGARLALIGAPNAGKSSLLNALLGYERALVSPIPGTTRDYLEAPLELFGIPLVAVDTAGVRETEDPVERMGVERALRIAEEADLVLYVVDRSQPKPAPPPLPWARTLKVATKSDLPPAWEDPEFLPVSSLTGEGLGRLKEALREALLGREGGEVLLTERQVEALLRARERLEEALALPEDLMGLALEEAARALALLTGKEVAEEVVARVFQNFCVGK.

Arginine 24, glutamate 86, and lysine 125 together coordinate (6S)-5-formyl-5,6,7,8-tetrahydrofolate. The region spanning 218-363 (GARLALIGAP…LKEALREALL (146 aa)) is the TrmE-type G domain. A K(+)-binding site is contributed by asparagine 228. Residues 228-233 (NAGKSS), 247-253 (SPIPGTT), and 272-275 (DTAG) contribute to the GTP site. Serine 232 lines the Mg(2+) pocket. K(+) is bound by residues serine 247, isoleucine 249, and threonine 252. Threonine 253 contacts Mg(2+). Lysine 433 is a binding site for (6S)-5-formyl-5,6,7,8-tetrahydrofolate.

This sequence belongs to the TRAFAC class TrmE-Era-EngA-EngB-Septin-like GTPase superfamily. TrmE GTPase family. As to quaternary structure, homodimer. Heterotetramer of two MnmE and two MnmG subunits. K(+) serves as cofactor.

It localises to the cytoplasm. In terms of biological role, exhibits a very high intrinsic GTPase hydrolysis rate. Involved in the addition of a carboxymethylaminomethyl (cmnm) group at the wobble position (U34) of certain tRNAs, forming tRNA-cmnm(5)s(2)U34. This is tRNA modification GTPase MnmE from Thermus thermophilus (strain ATCC BAA-163 / DSM 7039 / HB27).